The following is a 211-amino-acid chain: Glycerol-3-phosphate acyltransferase (211 aa).

Helical transmembrane passes span Ala-5–Cys-25, Pro-80–Phe-100, Phe-112–Leu-132, and Gly-138–Phe-158.

This sequence belongs to the PlsY family. In terms of assembly, probably interacts with PlsX.

It localises to the cell inner membrane. The catalysed reaction is an acyl phosphate + sn-glycerol 3-phosphate = a 1-acyl-sn-glycero-3-phosphate + phosphate. Its pathway is lipid metabolism; phospholipid metabolism. Functionally, catalyzes the transfer of an acyl group from acyl-phosphate (acyl-PO(4)) to glycerol-3-phosphate (G3P) to form lysophosphatidic acid (LPA). This enzyme utilizes acyl-phosphate as fatty acyl donor, but not acyl-CoA or acyl-ACP. This Pectobacterium carotovorum subsp. carotovorum (strain PC1) protein is Glycerol-3-phosphate acyltransferase.